The following is a 168-amino-acid chain: MSSATVSRTSRSKATGASSSSISSSIRASPSSSSSGGGGGGGTRRRRRRTGRRSTKRSIISPRRRRMVSVTARPFSRGRSWKTPPVMSRLWVGGGLPCGRDTALTMHLNNCCVGTPPPRDLSESASTGSENLSRKASNQSQSQGRLSTVAGGSGWRSGLFLAEVLLMM.

2 disordered regions span residues 1 to 81 (MSSA…GRSW) and 119 to 150 (RDLS…STVA). Low complexity predominate over residues 7–34 (SRTSRSKATGASSSSISSSIRASPSSSS). Residues 43–67 (TRRRRRRTGRRSTKRSIISPRRRRM) show a composition bias toward basic residues. Polar residues predominate over residues 123 to 146 (ESASTGSENLSRKASNQSQSQGRL).

This is an uncharacterized protein from Human adenovirus C serotype 2 (HAdV-2).